Reading from the N-terminus, the 349-residue chain is tRNA pseudouridine synthase D (349 aa).

Phe-27 lines the substrate pocket. The active-site Nucleophile is Asp-80. Asn-129 lines the substrate pocket. The TRUD domain occupies 155–303; that stretch reads GVPNYFGAQR…VEAARRAMLL (149 aa). A substrate-binding site is contributed by Phe-329.

The protein belongs to the pseudouridine synthase TruD family.

The catalysed reaction is uridine(13) in tRNA = pseudouridine(13) in tRNA. Its function is as follows. Responsible for synthesis of pseudouridine from uracil-13 in transfer RNAs. In Shigella dysenteriae serotype 1 (strain Sd197), this protein is tRNA pseudouridine synthase D.